Here is a 310-residue protein sequence, read N- to C-terminus: Carbamate kinase 1 (310 aa).

In terms of assembly, homodimer (predominantly) and homotetramer.

It localises to the cytoplasm. It carries out the reaction hydrogencarbonate + NH4(+) + ATP = carbamoyl phosphate + ADP + H2O + H(+). It functions in the pathway metabolic intermediate metabolism; carbamoyl phosphate degradation; CO(2) and NH(3) from carbamoyl phosphate: step 1/1. Inhibited by adenosine(5')pentaphospho(5')adenosine (Ap5A), Ap6A and to a much lower extent by Ap4A. Functionally, catalyzes the reversible synthesis of carbamate and ATP from carbamoyl phosphate and ADP. Can also catalyze, although with low efficiency, the phosphorylation of bicarbonate, leading to the formation of carboxyphosphate, an unstable intermediate found in the reactions catalyzed by carbamoyl-phosphate synthase and biotin carboxylase. Can also use acetate. The chain is Carbamate kinase 1 (arcC1) from Enterococcus faecium (Streptococcus faecium).